The following is a 90-amino-acid chain: MKKKGGRKIFGFMVKEEKEEKKGSVEFQVFSFTNKIRRLASHLELHKKDFSSERGLRRLLGKRRRLLAYLAKKNRVRYKKLISQLNIREQ.

Belongs to the universal ribosomal protein uS15 family. As to quaternary structure, part of the 30S ribosomal subunit.

It localises to the plastid. It is found in the chloroplast. The chain is Small ribosomal subunit protein uS15c (rps15-A) from Brachypodium distachyon (Purple false brome).